The sequence spans 246 residues: 2-C-methyl-D-erythritol 4-phosphate cytidylyltransferase (246 aa).

Belongs to the IspD/TarI cytidylyltransferase family. IspD subfamily.

The enzyme catalyses 2-C-methyl-D-erythritol 4-phosphate + CTP + H(+) = 4-CDP-2-C-methyl-D-erythritol + diphosphate. It functions in the pathway isoprenoid biosynthesis; isopentenyl diphosphate biosynthesis via DXP pathway; isopentenyl diphosphate from 1-deoxy-D-xylulose 5-phosphate: step 2/6. Its function is as follows. Catalyzes the formation of 4-diphosphocytidyl-2-C-methyl-D-erythritol from CTP and 2-C-methyl-D-erythritol 4-phosphate (MEP). The polypeptide is 2-C-methyl-D-erythritol 4-phosphate cytidylyltransferase (Clostridium tetani (strain Massachusetts / E88)).